Reading from the N-terminus, the 101-residue chain is NADH-quinone oxidoreductase subunit K (101 aa).

The next 3 helical transmembrane spans lie at 4-24 (LSHY…GIFL), 30-50 (IILL…FVAF), and 61-81 (IFVF…LAIL).

Belongs to the complex I subunit 4L family. In terms of assembly, NDH-1 is composed of 14 different subunits. Subunits NuoA, H, J, K, L, M, N constitute the membrane sector of the complex.

The protein resides in the cell inner membrane. It carries out the reaction a quinone + NADH + 5 H(+)(in) = a quinol + NAD(+) + 4 H(+)(out). Its function is as follows. NDH-1 shuttles electrons from NADH, via FMN and iron-sulfur (Fe-S) centers, to quinones in the respiratory chain. The immediate electron acceptor for the enzyme in this species is believed to be ubiquinone. Couples the redox reaction to proton translocation (for every two electrons transferred, four hydrogen ions are translocated across the cytoplasmic membrane), and thus conserves the redox energy in a proton gradient. The sequence is that of NADH-quinone oxidoreductase subunit K from Nitrosomonas eutropha (strain DSM 101675 / C91 / Nm57).